Here is a 600-residue protein sequence, read N- to C-terminus: UvrABC system protein C (600 aa).

The region spanning Asp15–Val92 is the GIY-YIG domain. One can recognise a UVR domain in the interval Ala197–Thr232.

Belongs to the UvrC family. In terms of assembly, interacts with UvrB in an incision complex.

Its subcellular location is the cytoplasm. The UvrABC repair system catalyzes the recognition and processing of DNA lesions. UvrC both incises the 5' and 3' sides of the lesion. The N-terminal half is responsible for the 3' incision and the C-terminal half is responsible for the 5' incision. The polypeptide is UvrABC system protein C (Lactobacillus johnsonii (strain CNCM I-12250 / La1 / NCC 533)).